Here is a 176-residue protein sequence, read N- to C-terminus: Large ribosomal subunit protein eL20 (176 aa).

It belongs to the eukaryotic ribosomal protein eL20 family. Component of the large ribosomal subunit.

The protein localises to the cytoplasm. Component of the large ribosomal subunit. The ribosome is a large ribonucleoprotein complex responsible for the synthesis of proteins in the cell. In Ictalurus punctatus (Channel catfish), this protein is Large ribosomal subunit protein eL20 (rpl18a).